The sequence spans 313 residues: Fructose-1,6-bisphosphatase class 1 (313 aa).

The Mg(2+) site is built by Glu90, Asp111, Leu113, and Asp114. Substrate-binding positions include 114-117, Tyr222, and Lys253; that span reads DGSS. Residue Glu259 participates in Mg(2+) binding.

The protein belongs to the FBPase class 1 family. Homotetramer. Requires Mg(2+) as cofactor.

The protein resides in the cytoplasm. It catalyses the reaction beta-D-fructose 1,6-bisphosphate + H2O = beta-D-fructose 6-phosphate + phosphate. The protein operates within carbohydrate biosynthesis; gluconeogenesis. This chain is Fructose-1,6-bisphosphatase class 1, found in Geotalea uraniireducens (strain Rf4) (Geobacter uraniireducens).